The chain runs to 621 residues: Proton pump-interactor BIP131 (621 aa).

A coiled-coil region spans residues Ile250–Thr305. A compositionally biased stretch (basic and acidic residues) spans Ser374–Ile387. The segment at Ser374 to Pro572 is disordered. Positions Lys430 to Pro441 are enriched in low complexity. Over residues Pro448–Lys516 the composition is skewed to basic and acidic residues. A coiled-coil region spans residues Glu466 to Thr524. The helical transmembrane segment at Trp589–Tyr609 threads the bilayer.

It belongs to the plant proton pump-interactor protein family. In terms of assembly, interacts with BRI1.

The protein resides in the cell membrane. Functionally, may regulate plasma membrane ATPase activity. This Oryza sativa subsp. japonica (Rice) protein is Proton pump-interactor BIP131.